Here is a 1063-residue protein sequence, read N- to C-terminus: Coiled-coil domain-containing protein 187 (1063 aa).

7 disordered regions span residues 1–41 (MPTL…AADW), 62–184 (RWPG…SRLH), 219–278 (RVEA…KDED), 300–319 (PPPV…PALT), 392–484 (RKGG…ERLG), 496–539 (GQAC…ATQP), and 551–658 (WEDP…LEEK). Low complexity predominate over residues 111–124 (SSVSSGRLSCSSGG). Residues 146–160 (RKSDARLEQLRDKIR) are compositionally biased toward basic and acidic residues. The span at 163–181 (AWQQGSCASLGTSAPSSAS) shows a compositional bias: polar residues. A compositionally biased stretch (basic and acidic residues) spans 219–233 (RVEAKASHGQGRELS). 2 stretches are compositionally biased toward basic and acidic residues: residues 431–442 (TERKHSSLERAR) and 472–484 (SFQR…ERLG). The segment covering 508 to 517 (QRQGPSSQRP) has biased composition (low complexity). Positions 816–851 (HLRHKQAQLQALETTAKVLKQRVDSLTAKLQGAEAL) form a coiled coil. Residues 1010–1030 (PRSCGKGDPADRPWAGWSGGR) are disordered.

In Homo sapiens (Human), this protein is Coiled-coil domain-containing protein 187.